Reading from the N-terminus, the 277-residue chain is Large ribosomal subunit protein uL2c (277 aa).

Disordered regions lie at residues 24–57 (IVQS…RGGG) and 226–266 (NAAD…HKYS).

It belongs to the universal ribosomal protein uL2 family. As to quaternary structure, part of the 50S ribosomal subunit.

It is found in the plastid. It localises to the chloroplast. The sequence is that of Large ribosomal subunit protein uL2c (rpl2) from Zygnema circumcarinatum (Green alga).